We begin with the raw amino-acid sequence, 179 residues long: ATP synthase subunit delta (179 aa).

This sequence belongs to the ATPase delta chain family. As to quaternary structure, F-type ATPases have 2 components, F(1) - the catalytic core - and F(0) - the membrane proton channel. F(1) has five subunits: alpha(3), beta(3), gamma(1), delta(1), epsilon(1). F(0) has three main subunits: a(1), b(2) and c(10-14). The alpha and beta chains form an alternating ring which encloses part of the gamma chain. F(1) is attached to F(0) by a central stalk formed by the gamma and epsilon chains, while a peripheral stalk is formed by the delta and b chains.

Its subcellular location is the cell membrane. Functionally, f(1)F(0) ATP synthase produces ATP from ADP in the presence of a proton or sodium gradient. F-type ATPases consist of two structural domains, F(1) containing the extramembraneous catalytic core and F(0) containing the membrane proton channel, linked together by a central stalk and a peripheral stalk. During catalysis, ATP synthesis in the catalytic domain of F(1) is coupled via a rotary mechanism of the central stalk subunits to proton translocation. This protein is part of the stalk that links CF(0) to CF(1). It either transmits conformational changes from CF(0) to CF(1) or is implicated in proton conduction. The chain is ATP synthase subunit delta from Clostridium perfringens (strain SM101 / Type A).